The chain runs to 846 residues: Cap-specific mRNA (nucleoside-2'-O-)-methyltransferase 1 (846 aa).

Residues 1–81 (MKRKSDSEQQ…LPDTLAEGSS (81 aa)) are disordered. Residues 2 to 20 (KRKSDSEQQPSVQCRKKKR) carry the Bipartite nuclear localization signal motif. Residues 27–45 (NLSSTSDDDTQYSNHGTQE) are compositionally biased toward polar residues. The region spanning 87–133 (YNSVSQKLMAKMGFREGEGLGKFGQGRKEIVETSKQKGRRGLGMVLK) is the G-patch domain. Substrate is bound by residues 203-207 (KSAFD) and arginine 218. The 220-residue stretch at 231–450 (FFLNRAAMKM…ERYVVCRGLK (220 aa)) folds into the RrmJ-type SAM-dependent 2'-O-MTase domain. Residue asparagine 234 participates in S-adenosyl-L-methionine binding. Lysine 239 is a catalytic residue. Residues 277–283 (CAGPGGF) and 335–336 (DV) contribute to the S-adenosyl-L-methionine site. Aspartate 364 is an active-site residue. Residue 374 to 376 (NIQ) coordinates substrate. Lysine 404 (proton acceptor) is an active-site residue. Substrate is bound at residue asparagine 439. Residues 752–786 (KTINEPWSMAYSKSQKRKYFYNSKTKNSQFELPVE) form the WW domain.

The protein localises to the nucleus. The enzyme catalyses a 5'-end (N(7)-methyl 5'-triphosphoguanosine)-ribonucleoside in mRNA + S-adenosyl-L-methionine = a 5'-end (N(7)-methyl 5'-triphosphoguanosine)-(2'-O-methyl-ribonucleoside) in mRNA + S-adenosyl-L-homocysteine + H(+). S-adenosyl-L-methionine-dependent methyltransferase that mediates mRNA cap1 2'-O-ribose methylation to the 5'-cap structure of mRNAs. Methylates the ribose of the first nucleotide of a m(7)GpppG-capped mRNA and small nuclear RNA (snRNA) to produce m(7)GpppRm (cap1). Displays a preference for cap0 transcripts. Cap1 modification is linked to higher levels of translation. May be involved in the interferon response pathway. This Xenopus laevis (African clawed frog) protein is Cap-specific mRNA (nucleoside-2'-O-)-methyltransferase 1 (cmtr1).